Consider the following 357-residue polypeptide: MGLALILVINPGSTSTKVAVFRDKEPVFTETLRHSTEELSKYKRIIDQFEFRTQAILDMLKEKGISLSQIDAIVGRGGLLKPIESGTYIVNEKMLEDLKKAERGEHASNLGAIIAYTLAKEHNIPAYIVDPVVVDELEDVARITGLPEIEKQSIFHALNQKAIARRLASDLGKRYDEVNLIIAHLGGGISVGAHRKGRVIDVNDALNGEGPFSPERAGGLPVLDLVKLCYSGKYTFEEMKKKLIGKGGIVAHLGTNDVREVYKMIENGDKNAELILDAMAYQTAKEIGSMAVVLKGKVDAIGITGGIAHNEDFVRRIRERVEFIAPVYVYPGEDEMLALAEGAYRVLTGEENPKTYS.

It belongs to the acetokinase family.

The protein resides in the cytoplasm. The catalysed reaction is butanoate + ATP = butanoyl phosphate + ADP. The chain is Probable butyrate kinase 1 from Caldanaerobacter subterraneus subsp. tengcongensis (strain DSM 15242 / JCM 11007 / NBRC 100824 / MB4) (Thermoanaerobacter tengcongensis).